A 30-amino-acid polypeptide reads, in one-letter code: Cyclotide cter-Q (30 aa).

Positions 1–30 (GIPCGESCVFIPCISTVIGCSCKNKVCYRN) form a cross-link, cyclopeptide (Gly-Asn). 3 disulfides stabilise this stretch: Cys4–Cys20, Cys8–Cys22, and Cys13–Cys27.

This is a cyclic peptide.

It is found in the secreted. Functionally, probably participates in a plant defense mechanism. The chain is Cyclotide cter-Q from Clitoria ternatea (Butterfly pea).